The primary structure comprises 1642 residues: Coiled-coil domain-containing protein 7A (1642 aa).

The tract at residues 21-51 (PYKKGLLNSSPKPKEKHNAKSKYGKNESMVL) is disordered. The LRR 1 repeat unit spans residues 161–184 (VNQMEEISKDQSNLEELQSDGKTA). Residues 279–330 (LEKALNDQQTIESKYKQLETDFQMLIMEKTLLEAEIRRLREIERVKSAAKEE) are a coiled coil. The stretch at 1310 to 1333 (IKELSKTLNLDGGDIELSDFVFKT) is one LRR 2 repeat.

Exclusively expressed in the testes.

The chain is Coiled-coil domain-containing protein 7A from Mus musculus (Mouse).